Reading from the N-terminus, the 288-residue chain is MDVTAKYELIGLMAYPIRHSLSPEMQNKALEKAGLPFTYMAFEVDNDSFPGAIEGLKALKMRGTGVSMPNKQLACEYVDELTPAAKLVGAINTIVNDDGYLRGYNTDGTGHIRAIKESGFDIKGKTMVLLGAGGASTAIGAQGAIEGLKEIKLFNRRDEFFDKALAFAQRVNENTDCVVTVTDLADQQAFAEALASADILTNGTKVGMKPLENESLVNDISLLHPGLLVTECVYNPHMTKLLQQAQQAGCKTIDGYGMLLWQGAEQFTLWTGKDFPLEYVKQVMGFGA.

Positions 71 and 107 each coordinate substrate. Residues 132-135, 155-158, Lys-205, 232-235, and Gly-255 contribute to the NAD(+) site; these read AGGA, NRRD, and CVYN.

It belongs to the shikimate dehydrogenase family. As to quaternary structure, homodimer.

The enzyme catalyses L-quinate + NAD(+) = 3-dehydroquinate + NADH + H(+). It catalyses the reaction L-quinate + NADP(+) = 3-dehydroquinate + NADPH + H(+). The catalysed reaction is shikimate + NADP(+) = 3-dehydroshikimate + NADPH + H(+). It carries out the reaction shikimate + NAD(+) = 3-dehydroshikimate + NADH + H(+). It participates in metabolic intermediate biosynthesis; chorismate biosynthesis; chorismate from D-erythrose 4-phosphate and phosphoenolpyruvate: step 4/7. Functionally, the actual biological function of YdiB remains unclear, nor is it known whether 3-dehydroshikimate or quinate represents the natural substrate. Catalyzes the reversible NAD-dependent reduction of both 3-dehydroshikimate (DHSA) and 3-dehydroquinate to yield shikimate (SA) and quinate, respectively. It can use both NAD or NADP for catalysis, however it has higher catalytic efficiency with NAD. The protein is Quinate/shikimate dehydrogenase of Escherichia coli O81 (strain ED1a).